The primary structure comprises 180 residues: Transcription repressor NadR (180 aa).

As to quaternary structure, homodimer.

Functionally, in the presence of nicotinic acid represses transcription of the nadBCA and nifS-nadR operons. Also binds to DNA upstream of the niaP gene, probably regulating it as well. May bind nicotinic acid. The polypeptide is Transcription repressor NadR (nadR) (Bacillus subtilis (strain 168)).